Consider the following 912-residue polypeptide: Accessory gland protein Acp36DE (912 aa).

A signal peptide spans 1–23 (MWTLTCQQFIALILLGTLVPSES). Composition is skewed to low complexity over residues 193-220 (QSQS…QEQS), 230-255 (SESQ…SQRQ), 271-324 (KSNE…GLQQ), and 521-544 (QSQL…EQLQ). 5 disordered regions span residues 193–255 (QSQS…SQRQ), 271–349 (KSNE…QKQL), 518–544 (TQTQ…EQLQ), 638–671 (PSEG…SGGG), and 732–912 (GQQQ…NLSG). Composition is skewed to low complexity over residues 732-757 (GQQQ…SSSQ) and 765-785 (QSTG…GLQT). Over residues 803–818 (RLKEQEQLRIQTENDQ) the composition is skewed to basic and acidic residues. The segment covering 821–845 (SSSSSHSNSQNSQSSSSQSSQASQS) has biased composition (low complexity). The segment covering 851–861 (EAGNRNTLLLD) has biased composition (polar residues). Residues 862–897 (QSSSKTQSESKSESSSQSSSHSSSQSTSNSSSNVQS) are compositionally biased toward low complexity. Over residues 898–912 (KLQGESQALLNNLSG) the composition is skewed to polar residues.

In terms of processing, proteolytically cleaved by the seminal metalloprotease Semp1. Cleavage appears to take place in the mated female. Detected in the male accessory glands (at protein level). Produced in the accessory glands and secreted into seminal fluid.

It is found in the secreted. In terms of biological role, responsible for physiological and behavioral changes in mated female flies. Associates with sperm and localizes to specific regions of the female reproductive tract, including the sperm storage organs. It accelerates sperm accumulation into storage but does not mediate the entry of the first sperm into storage. Once sperm storage has initiated it seems to act as a guidance factor helping subsequent sperm move into storage, a corral concentrating sperm around the SSO entrances and/or a trigger for responses within the female that accelerate storage of sperm. This is Accessory gland protein Acp36DE (Acp36DE) from Drosophila melanogaster (Fruit fly).